We begin with the raw amino-acid sequence, 590 residues long: DELLA protein GAI1 (590 aa).

The span at 1–10 shows a compositional bias: basic residues; that stretch reads MKREYHHPHH. The segment at 1 to 28 is disordered; the sequence is MKREYHHPHHPTCSTSPTGKGKMWDADP. The short motif at 35 to 39 is the DELLA motif element; sequence DELLA. The disordered stretch occupies residues 153–182; it reads HIEQPPQQPPAPPLYQRDNKRLKPTTSATA. The 371-residue stretch at 205–575 folds into the GRAS domain; that stretch reads VDSQETGIRL…RPLIATSAWQ (371 aa). Residues 212 to 266 are leucine repeat I (LRI); sequence IRLVHTLMACAEAVQQENLKLAEALVKQIGFLAVSQAGAMRKVATYFAEGLARRI. Residues 284–349 form a VHIID region; that stretch reads QMHFYETCPY…GGPPSFRLTG (66 aa). A VHIID motif is present at residues 315–319; that stretch reads VHVID. A leucine repeat II (LRII) region spans residues 363-395; the sequence is EVGWKLAQLAETIHVEFEYRGFVANSLADLDAS. Residues 405–496 are PFYRE; sequence VAVNSVFELH…EVYLGQQICN (92 aa). The short motif at 413-417 is the LXXLL motif element; that stretch reads LHSLL. Residues 499-575 form an SAW region; sequence ACEGPERVER…RPLIATSAWQ (77 aa).

It belongs to the GRAS family. DELLA subfamily. Phosphorylated. Post-translationally, ubiquitinated. Upon GA application it is ubiquitinated, leading to its subsequent degradation.

The protein localises to the nucleus. Probable transcriptional regulator that acts as a repressor of the gibberellin (GA) signaling pathway. Probably acts by participating in large multiprotein complexes that repress transcription of GA-inducible genes. Upon GA application, it is degraded by the proteasome, allowing the GA signaling pathway. The polypeptide is DELLA protein GAI1 (GAI1) (Vitis vinifera (Grape)).